Reading from the N-terminus, the 67-residue chain is MSLFPVIVVFGLSFPPIFFELLLSLAIFWLVRRVLLPTGIYDFVWHPALFNTALYCCLFYLISRLFV.

2 helical membrane passes run 3-23 (LFPV…ELLL) and 43-63 (FVWH…YLIS).

It belongs to the AaeX family.

It localises to the cell membrane. This Escherichia coli O1:K1 / APEC protein is Protein AaeX.